A 219-amino-acid chain; its full sequence is Ribose-5-phosphate isomerase A (219 aa).

Residues 28-31 (TGST), 81-84 (DGAD), and 94-97 (KGGG) each bind substrate. The active-site Proton acceptor is the Glu103. Lys121 serves as a coordination point for substrate.

This sequence belongs to the ribose 5-phosphate isomerase family. As to quaternary structure, homodimer.

It carries out the reaction aldehydo-D-ribose 5-phosphate = D-ribulose 5-phosphate. Its pathway is carbohydrate degradation; pentose phosphate pathway; D-ribose 5-phosphate from D-ribulose 5-phosphate (non-oxidative stage): step 1/1. Functionally, catalyzes the reversible conversion of ribose-5-phosphate to ribulose 5-phosphate. The chain is Ribose-5-phosphate isomerase A from Salmonella choleraesuis (strain SC-B67).